We begin with the raw amino-acid sequence, 92 residues long: MGLLKKKDSTSARSSTSPCADLRNAYHNCFNKWYSEKFVKGQWDKEECVAEWKKYRDCLSENLDGKLLTRILEVDGELNPTKQATDSKESSS.

Residues 1-10 (MGLLKKKDST) are compositionally biased toward basic and acidic residues. Residues 1–21 (MGLLKKKDSTSARSSTSPCAD) form a disordered region. One can recognise a CHCH domain in the interval 16–66 (TSPCADLRNAYHNCFNKWYSEKFVKGQWDKEECVAEWKKYRDCLSENLDGK). 2 consecutive short sequence motifs (cx9C motif) follow at residues 19–29 (CADLRNAYHNC) and 48–58 (CVAEWKKYRDC). 2 disulfide bridges follow: Cys19–Cys58 and Cys29–Cys48.

It belongs to the TRIAP1/MDM35 family.

This is an uncharacterized protein from Arabidopsis thaliana (Mouse-ear cress).